The chain runs to 228 residues: Protein LIAT1 (228 aa).

Residues 1 to 108 (MAGRGGTGAA…RAEPRDKEEN (108 aa)) are disordered. Over residues 12-24 (YGEEGEEEEEEEA) the composition is skewed to acidic residues. The lysine-rich domain stretch occupies residues 49-71 (KRKVKKKKKKKKTKGSGKGDADK). Positions 50 to 63 (RKVKKKKKKKKTKG) are enriched in basic residues. Positions 90 to 108 (LNPHKDHGLRAEPRDKEEN) are enriched in basic and acidic residues. Residues 113–165 (PYSYSINHPCFAEIEDTLSSQINESLRWDGILTDPEAEKERIRIYKLNRRKRY) are interaction with ATE1. Residues 169 to 178 (ALKCFHSDPC) form repeat 1.

In terms of assembly, self-associates (via Lys-rich domain); targets LIAT1 to the nucleolus. Interacts with ATE1; it is not a substrate of ATE1, the interaction takes place in the cytoplasm and seems to increase ATE1 arginyltransferase activity. Interacts with JMJD6 and MRPS14. Post-translationally, post-translationally modified by JMJD6 lysyl-hydroxylase activity at its Lys-rich domain, which inhibits its self-association and nucleolar localization. In terms of tissue distribution, highly expressed in spleen, thymus, liver and brown adipose tissue. Moderately expressed in liver, testis and lung.

It localises to the nucleus. The protein resides in the nucleolus. It is found in the cytoplasm. Its function is as follows. Participates in nucleolar liquid-liquid phase separation (LLPS) through its N-terminal intrinsically disordered region (IDR). May be involved in ATE1-mediated N-terminal arginylation. This chain is Protein LIAT1, found in Mus musculus (Mouse).